Consider the following 71-residue polypeptide: ATP synthase subunit c 1 (71 aa).

2 helical membrane passes run 4–24 and 46–66; these read FIGA…VGHV and LFVG…IALL.

The protein belongs to the ATPase C chain family. As to quaternary structure, F-type ATPases have 2 components, F(1) - the catalytic core - and F(0) - the membrane proton channel. F(1) has five subunits: alpha(3), beta(3), gamma(1), delta(1), epsilon(1). F(0) has four main subunits: a(1), b(1), b'(1) and c(10-14). The alpha and beta chains form an alternating ring which encloses part of the gamma chain. F(1) is attached to F(0) by a central stalk formed by the gamma and epsilon chains, while a peripheral stalk is formed by the delta, b and b' chains.

It is found in the cell inner membrane. Functionally, f(1)F(0) ATP synthase produces ATP from ADP in the presence of a proton or sodium gradient. F-type ATPases consist of two structural domains, F(1) containing the extramembraneous catalytic core and F(0) containing the membrane proton channel, linked together by a central stalk and a peripheral stalk. During catalysis, ATP synthesis in the catalytic domain of F(1) is coupled via a rotary mechanism of the central stalk subunits to proton translocation. Its function is as follows. Key component of the F(0) channel; it plays a direct role in translocation across the membrane. A homomeric c-ring of between 10-14 subunits forms the central stalk rotor element with the F(1) delta and epsilon subunits. In Cereibacter sphaeroides (strain ATCC 17029 / ATH 2.4.9) (Rhodobacter sphaeroides), this protein is ATP synthase subunit c 1.